The following is a 348-amino-acid chain: Eukaryotic translation initiation factor 3 subunit I (348 aa).

6 WD repeats span residues 8–49 (GHER…GTFE), 51–91 (HMGT…YTYE), 93–135 (PTPV…PKNQ), 147–186 (DGAKKVTIAGWSAGGKYIIAGHEDGLVSKYDGATGEFIDS), 196–238 (EKIH…KVYK), and 294–333 (GHFGPLNTIAVHPDGTGYASGGEDGFIRLHSFDKSYYDFE).

It belongs to the eIF-3 subunit I family. Component of the eukaryotic translation initiation factor 3 (eIF-3) complex.

It is found in the cytoplasm. Functionally, component of the eukaryotic translation initiation factor 3 (eIF-3) complex, which is involved in protein synthesis of a specialized repertoire of mRNAs and, together with other initiation factors, stimulates binding of mRNA and methionyl-tRNAi to the 40S ribosome. The eIF-3 complex specifically targets and initiates translation of a subset of mRNAs involved in cell proliferation. In Meyerozyma guilliermondii (strain ATCC 6260 / CBS 566 / DSM 6381 / JCM 1539 / NBRC 10279 / NRRL Y-324) (Yeast), this protein is Eukaryotic translation initiation factor 3 subunit I.